The primary structure comprises 337 residues: Large ribosomal subunit protein uL3 (337 aa).

The tract at residues 1–26 is disordered; it reads MGHAHAPRRGSLGYSPRVRARSQKPK.

It belongs to the universal ribosomal protein uL3 family. Part of the 50S ribosomal subunit. Forms a cluster with proteins L14 and L24e.

In terms of biological role, one of the primary rRNA binding proteins, it binds directly near the 3'-end of the 23S rRNA, where it nucleates assembly of the 50S subunit. The polypeptide is Large ribosomal subunit protein uL3 (Methanocella arvoryzae (strain DSM 22066 / NBRC 105507 / MRE50)).